The sequence spans 264 residues: Tryptophan synthase alpha chain (264 aa).

Active-site proton acceptor residues include Glu49 and Asp60.

Belongs to the TrpA family. Tetramer of two alpha and two beta chains.

The enzyme catalyses (1S,2R)-1-C-(indol-3-yl)glycerol 3-phosphate + L-serine = D-glyceraldehyde 3-phosphate + L-tryptophan + H2O. The protein operates within amino-acid biosynthesis; L-tryptophan biosynthesis; L-tryptophan from chorismate: step 5/5. Its function is as follows. The alpha subunit is responsible for the aldol cleavage of indoleglycerol phosphate to indole and glyceraldehyde 3-phosphate. This chain is Tryptophan synthase alpha chain, found in Laribacter hongkongensis (strain HLHK9).